Reading from the N-terminus, the 345-residue chain is Tubulin-specific chaperone C (345 aa).

Residue methionine 1 is modified to N-acetylmethionine. The interval 1 to 56 (METGGLSAAALANGDLGSQRERTLVPERLQKREHERQLEVERRKQKRQDQEVEEEK) is disordered. The span at 18–50 (SQRERTLVPERLQKREHERQLEVERRKQKRQDQ) shows a compositional bias: basic and acidic residues. Phosphoserine occurs at positions 80 and 167. Positions 139 to 170 (FKTRKKDAASATQVASAPDAPAAEGSLTSPPP) are disordered. In terms of domain architecture, C-CAP/cofactor C-like spans 170–322 (PLKEEGDFDS…NWNDVDDFNW (153 aa)).

Belongs to the TBCC family. As to quaternary structure, supercomplex made of cofactors A to E. Cofactors A and D function by capturing and stabilizing tubulin in a quasi-native conformation. Cofactor E binds to the cofactor D-tubulin complex; interaction with cofactor C then causes the release of tubulin polypeptides that are committed to the native state.

Its subcellular location is the cytoplasm. Functionally, tubulin-folding protein; involved in the final step of the tubulin folding pathway. The polypeptide is Tubulin-specific chaperone C (TBCC) (Bos taurus (Bovine)).